Reading from the N-terminus, the 134-residue chain is Small ribosomal subunit protein bS16 (134 aa).

Positions 105 to 134 are disordered; that stretch reads EAERRQKRLTAKTRRRQAKKAAEAAGSAEG. Basic residues predominate over residues 109-123; the sequence is RQKRLTAKTRRRQAK.

Belongs to the bacterial ribosomal protein bS16 family.

The chain is Small ribosomal subunit protein bS16 from Chlorobaculum parvum (strain DSM 263 / NCIMB 8327) (Chlorobium vibrioforme subsp. thiosulfatophilum).